A 1183-amino-acid polypeptide reads, in one-letter code: Chromosome partition protein Smc (1183 aa).

32 to 39 contacts ATP; it reads PNGCGKTN. 2 coiled-coil regions span residues 167–322 and 358–497; these read ITRY…ERLN and AEFE…ALCN. Residues 409–442 are disordered; the sequence is KEHLEGSVNRLDQRKRDLERSMEQAEPERRRTSE. Basic and acidic residues predominate over residues 419–442; sequence LDQRKRDLERSMEQAEPERRRTSE. Positions 523–632 constitute an SMC hinge domain; it reads LGCLSDLISV…VADLDAAEQL (110 aa). Coiled coils occupy residues 669 to 941 and 980 to 1025; these read GKKA…VMER and NELA…ALEK.

Belongs to the SMC family. As to quaternary structure, homodimer.

It is found in the cytoplasm. Required for chromosome condensation and partitioning. The protein is Chromosome partition protein Smc of Chlorobaculum tepidum (strain ATCC 49652 / DSM 12025 / NBRC 103806 / TLS) (Chlorobium tepidum).